The chain runs to 454 residues: Putative serine/threonine-protein phosphatase C27B7.6 (454 aa).

Mn(2+) contacts are provided by Asp-65, His-67, Asp-93, and Asn-125. His-126 serves as the catalytic Proton donor. The Mn(2+) site is built by His-174 and His-252. Positions 414 to 454 (RKKLGMTTSTTPPPPRTPSPDAPLAQSPPIPRSPPSSTENA) are disordered. Residues 424–447 (TPPPPRTPSPDAPLAQSPPIPRSP) show a composition bias toward pro residues.

It belongs to the PPP phosphatase family. PP-1 subfamily. Requires Mn(2+) as cofactor.

The catalysed reaction is O-phospho-L-seryl-[protein] + H2O = L-seryl-[protein] + phosphate. It carries out the reaction O-phospho-L-threonyl-[protein] + H2O = L-threonyl-[protein] + phosphate. The protein is Putative serine/threonine-protein phosphatase C27B7.6 of Caenorhabditis elegans.